We begin with the raw amino-acid sequence, 141 residues long: Large ribosomal subunit protein uL11 (141 aa).

Belongs to the universal ribosomal protein uL11 family. As to quaternary structure, part of the ribosomal stalk of the 50S ribosomal subunit. Interacts with L10 and the large rRNA to form the base of the stalk. L10 forms an elongated spine to which L12 dimers bind in a sequential fashion forming a multimeric L10(L12)X complex. In terms of processing, one or more lysine residues are methylated.

In terms of biological role, forms part of the ribosomal stalk which helps the ribosome interact with GTP-bound translation factors. The sequence is that of Large ribosomal subunit protein uL11 from Streptococcus suis (strain 05ZYH33).